The primary structure comprises 85 residues: UPF0386 protein RHE_CH01859 (85 aa).

The protein belongs to the UPF0386 family.

This is UPF0386 protein RHE_CH01859 from Rhizobium etli (strain ATCC 51251 / DSM 11541 / JCM 21823 / NBRC 15573 / CFN 42).